A 395-amino-acid chain; its full sequence is Putative 8-amino-7-oxononanoate synthase (395 aa).

Position 23 (Arg-23) interacts with substrate. 110-111 (GF) contributes to the pyridoxal 5'-phosphate binding site. His-135 contacts substrate. Pyridoxal 5'-phosphate contacts are provided by residues Ser-182, 207-210 (DEAH), and 239-242 (TFSK). Lys-242 is subject to N6-(pyridoxal phosphate)lysine. Thr-356 lines the substrate pocket.

This sequence belongs to the class-II pyridoxal-phosphate-dependent aminotransferase family. BioF subfamily. Homodimer. Pyridoxal 5'-phosphate is required as a cofactor.

The catalysed reaction is 6-carboxyhexanoyl-[ACP] + L-alanine + H(+) = (8S)-8-amino-7-oxononanoate + holo-[ACP] + CO2. The protein operates within cofactor biosynthesis; biotin biosynthesis. Its function is as follows. Catalyzes the decarboxylative condensation of pimeloyl-[acyl-carrier protein] and L-alanine to produce 8-amino-7-oxononanoate (AON), [acyl-carrier protein], and carbon dioxide. The chain is Putative 8-amino-7-oxononanoate synthase (bioF) from Bacillus anthracis.